A 560-amino-acid polypeptide reads, in one-letter code: Chaperonin GroEL 2 (560 aa).

ATP is bound by residues 29-32 (TLGP), lysine 50, 86-90 (DGTTT), glycine 414, and aspartate 494. The segment at 524–546 (EDEDDDDGGGGGGGGMPAGGAGG) is disordered. The segment covering 532–546 (GGGGGGGMPAGGAGG) has biased composition (gly residues).

The protein belongs to the chaperonin (HSP60) family. In terms of assembly, forms a cylinder of 14 subunits composed of two heptameric rings stacked back-to-back. Interacts with the co-chaperonin GroES.

Its subcellular location is the cytoplasm. The enzyme catalyses ATP + H2O + a folded polypeptide = ADP + phosphate + an unfolded polypeptide.. Functionally, together with its co-chaperonin GroES, plays an essential role in assisting protein folding. The GroEL-GroES system forms a nano-cage that allows encapsulation of the non-native substrate proteins and provides a physical environment optimized to promote and accelerate protein folding. The protein is Chaperonin GroEL 2 of Salinibacter ruber (strain DSM 13855 / M31).